Reading from the N-terminus, the 237-residue chain is MIYAQILAGGKGTRMGNVSMPKQFLPLNGKPIIVHTVEKFILNTRFDKILISSPKEWMNHAEDNIKKYISDDRIVVIEGGEDRNETIMNGIRFVEKTYGLTDDDIIVTHDAVRPFLTHRIIEENIDAALETGAVDTVIEALDTIVESSNHEVITDIPVRDHMYQGQTPQSFNMKKVFNHYQNLTPEKKQILTDACKICLLAGDDVKLVKGEIFNIKITTPYDLKVANAIIQERIAND.

Residues 7–10 and 80–86 contribute to the CTP site; these read LAGG and GEDRNET.

This sequence belongs to the IspD/TarI cytidylyltransferase family. TarI subfamily.

The enzyme catalyses D-ribitol 5-phosphate + CTP + H(+) = CDP-L-ribitol + diphosphate. It functions in the pathway cell wall biogenesis; poly(ribitol phosphate) teichoic acid biosynthesis. Catalyzes the transfer of the cytidylyl group of CTP to D-ribitol 5-phosphate. The protein is Ribitol-5-phosphate cytidylyltransferase of Listeria monocytogenes serotype 4b (strain F2365).